We begin with the raw amino-acid sequence, 545 residues long: Glucose-6-phosphate isomerase (545 aa).

Residue E351 is the Proton donor of the active site. Residues H382 and K510 contribute to the active site.

The protein belongs to the GPI family.

The protein resides in the cytoplasm. The catalysed reaction is alpha-D-glucose 6-phosphate = beta-D-fructose 6-phosphate. It participates in carbohydrate biosynthesis; gluconeogenesis. The protein operates within carbohydrate degradation; glycolysis; D-glyceraldehyde 3-phosphate and glycerone phosphate from D-glucose: step 2/4. Catalyzes the reversible isomerization of glucose-6-phosphate to fructose-6-phosphate. The chain is Glucose-6-phosphate isomerase from Shewanella baltica (strain OS223).